The sequence spans 751 residues: Pyridoxal-dependent decarboxylase domain-containing protein 1 (751 aa).

Positions 659–751 (QMRKEDSPDS…QEAESVETIR (93 aa)) are disordered. Residues 690–702 (DSISETSSVSQLE) show a composition bias toward polar residues. The segment covering 720–729 (PQERPAHILE) has biased composition (basic and acidic residues). Residues 742 to 751 (QEAESVETIR) are compositionally biased toward acidic residues.

The protein belongs to the group II decarboxylase family. Pyridoxal 5'-phosphate serves as cofactor.

This is Pyridoxal-dependent decarboxylase domain-containing protein 1 (pdxdc1) from Danio rerio (Zebrafish).